The following is a 345-amino-acid chain: Flotillin-like protein FloA 1 (345 aa).

The helical transmembrane segment at 26–46 (LLLLVGVFLALFFAAVLGFFF) threads the bilayer.

The protein belongs to the flotillin-like FloA family. As to quaternary structure, homooligomerizes.

It is found in the cell membrane. The protein resides in the membrane raft. Its function is as follows. Found in functional membrane microdomains (FMM) that may be equivalent to eukaryotic membrane rafts. FMMs are highly dynamic and increase in number as cells age. Flotillins are thought to be important factors in membrane fluidity. In Rhodopirellula baltica (strain DSM 10527 / NCIMB 13988 / SH1), this protein is Flotillin-like protein FloA 1.